The primary structure comprises 233 residues: 7-cyano-7-deazaguanine synthase 2 (233 aa).

8–18 (LSGGLDSTTCM) is a binding site for ATP. Residues Cys186, Cys194, Cys197, and Cys200 each contribute to the Zn(2+) site.

The protein belongs to the QueC family. In terms of assembly, homodimer. Zn(2+) is required as a cofactor.

The enzyme catalyses 7-carboxy-7-deazaguanine + NH4(+) + ATP = 7-cyano-7-deazaguanine + ADP + phosphate + H2O + H(+). It participates in purine metabolism; 7-cyano-7-deazaguanine biosynthesis. In terms of biological role, catalyzes the ATP-dependent conversion of 7-carboxy-7-deazaguanine (CDG) to 7-cyano-7-deazaguanine (preQ(0)). In Desulfitobacterium hafniense (strain Y51), this protein is 7-cyano-7-deazaguanine synthase 2.